A 238-amino-acid polypeptide reads, in one-letter code: Ribosome-recycling factor, mitochondrial (238 aa).

This sequence belongs to the RRF family.

It is found in the mitochondrion. Functionally, responsible for the release of ribosomes from messenger RNA at the termination of protein biosynthesis. May increase the efficiency of translation by recycling ribosomes from one round of translation to another. The sequence is that of Ribosome-recycling factor, mitochondrial from Caenorhabditis elegans.